Here is an 83-residue protein sequence, read N- to C-terminus: Large ribosomal subunit protein bL31B (83 aa).

This sequence belongs to the bacterial ribosomal protein bL31 family. Type B subfamily. Part of the 50S ribosomal subunit.

The protein is Large ribosomal subunit protein bL31B of Bacteroides fragilis (strain ATCC 25285 / DSM 2151 / CCUG 4856 / JCM 11019 / LMG 10263 / NCTC 9343 / Onslow / VPI 2553 / EN-2).